Consider the following 138-residue polypeptide: Large ribosomal subunit protein uL16 (138 aa).

The segment covering 1-15 (MLSPKKVKYRKKQRG) has biased composition (basic residues). The interval 1 to 20 (MLSPKKVKYRKKQRGRLSGE) is disordered.

Belongs to the universal ribosomal protein uL16 family. Part of the 50S ribosomal subunit.

Functionally, binds 23S rRNA and is also seen to make contacts with the A and possibly P site tRNAs. This is Large ribosomal subunit protein uL16 from Borrelia hermsii (strain HS1 / DAH).